We begin with the raw amino-acid sequence, 356 residues long: Peptide methionine sulfoxide reductase MsrA/MsrB (356 aa).

A peptide methionine sulfoxide reductase A region spans residues His-46–Glu-199. Residue Cys-54 is part of the active site. The MsrB domain occupies Asp-216–Leu-339. Residue Cys-328 is the Nucleophile of the active site.

It in the N-terminal section; belongs to the MsrA Met sulfoxide reductase family. The protein in the C-terminal section; belongs to the MsrB Met sulfoxide reductase family.

The catalysed reaction is L-methionyl-[protein] + [thioredoxin]-disulfide + H2O = L-methionyl-(S)-S-oxide-[protein] + [thioredoxin]-dithiol. It carries out the reaction [thioredoxin]-disulfide + L-methionine + H2O = L-methionine (S)-S-oxide + [thioredoxin]-dithiol. It catalyses the reaction L-methionyl-[protein] + [thioredoxin]-disulfide + H2O = L-methionyl-(R)-S-oxide-[protein] + [thioredoxin]-dithiol. Its function is as follows. Has an important function as a repair enzyme for proteins that have been inactivated by oxidation. Catalyzes the reversible oxidation-reduction of methionine sulfoxide in proteins to methionine. The protein is Peptide methionine sulfoxide reductase MsrA/MsrB (msrAB) of Aggregatibacter actinomycetemcomitans (Actinobacillus actinomycetemcomitans).